The sequence spans 193 residues: dCTP deaminase (193 aa).

DCTP-binding positions include 110 to 115 (RSSLAR), aspartate 128, 136 to 138 (VLE), tyrosine 171, lysine 178, and glutamine 182. The Proton donor/acceptor role is filled by glutamate 138.

It belongs to the dCTP deaminase family. Homotrimer.

It carries out the reaction dCTP + H2O + H(+) = dUTP + NH4(+). It participates in pyrimidine metabolism; dUMP biosynthesis; dUMP from dCTP (dUTP route): step 1/2. Catalyzes the deamination of dCTP to dUTP. The polypeptide is dCTP deaminase (Buchnera aphidicola subsp. Schizaphis graminum (strain Sg)).